Reading from the N-terminus, the 400-residue chain is tRNA-specific 2-thiouridylase MnmA (400 aa).

ATP contacts are provided by residues 19–26 and leucine 45; that span reads AMSGGVDS. Cysteine 113 (nucleophile) is an active-site residue. Cysteine 113 and cysteine 210 are disulfide-bonded. Glycine 137 is a binding site for ATP. The interval 160–162 is interaction with tRNA; that stretch reads RDQ. Cysteine 210 functions as the Cysteine persulfide intermediate in the catalytic mechanism.

The protein belongs to the MnmA/TRMU family.

The protein resides in the cytoplasm. It catalyses the reaction S-sulfanyl-L-cysteinyl-[protein] + uridine(34) in tRNA + AH2 + ATP = 2-thiouridine(34) in tRNA + L-cysteinyl-[protein] + A + AMP + diphosphate + H(+). Catalyzes the 2-thiolation of uridine at the wobble position (U34) of tRNA, leading to the formation of s(2)U34. The polypeptide is tRNA-specific 2-thiouridylase MnmA (Rhodopseudomonas palustris (strain BisA53)).